The primary structure comprises 742 residues: Photosystem I P700 chlorophyll a apoprotein A2 2 (742 aa).

8 consecutive transmembrane segments (helical) span residues 46 to 69, 135 to 158, 175 to 199, 273 to 291, 334 to 357, 373 to 399, 421 to 443, and 524 to 542; these read IFAT…FHVA, LYQG…LHLQ, LNHH…HVAI, MAHH…GHMY, LHFQ…QHMY, AALY…IFWV, AIIS…LYVH, and FLVH…LICV. Positions 566 and 575 each coordinate [4Fe-4S] cluster. The next 2 membrane-spanning stretches (helical) occupy residues 583–604 and 651–673; these read SFYL…YWHW and LSVW…MFLI. The chlorophyll a site is built by histidine 662, methionine 670, and tyrosine 678. Phylloquinone is bound at residue tryptophan 679. A helical membrane pass occupies residues 715-735; the sequence is LVGLAHFTVGYILTYAAFLIA.

It belongs to the PsaA/PsaB family. In terms of assembly, the PsaA/B heterodimer binds the P700 chlorophyll special pair and subsequent electron acceptors. PSI consists of a core antenna complex that captures photons, and an electron transfer chain that converts photonic excitation into a charge separation. The cyanobacterial PSI reaction center is composed of one copy each of PsaA,B,C,D,E,F,I,J,K,L,M and X, and forms trimeric complexes. Requires PSI electron transfer chain: 5 chlorophyll a, 1 chlorophyll a', 2 phylloquinones and 3 4Fe-4S clusters. PSI core antenna: 90 chlorophyll a, 22 carotenoids, 3 phospholipids and 1 galactolipid. P700 is a chlorophyll a/chlorophyll a' dimer, A0 is one or more chlorophyll a, A1 is one or both phylloquinones and FX is a shared 4Fe-4S iron-sulfur center. as cofactor.

The protein localises to the cellular thylakoid membrane. The enzyme catalyses reduced [plastocyanin] + hnu + oxidized [2Fe-2S]-[ferredoxin] = oxidized [plastocyanin] + reduced [2Fe-2S]-[ferredoxin]. Its function is as follows. PsaA and PsaB bind P700, the primary electron donor of photosystem I (PSI), as well as the electron acceptors A0, A1 and FX. PSI is a plastocyanin/cytochrome c6-ferredoxin oxidoreductase, converting photonic excitation into a charge separation, which transfers an electron from the donor P700 chlorophyll pair to the spectroscopically characterized acceptors A0, A1, FX, FA and FB in turn. Oxidized P700 is reduced on the lumenal side of the thylakoid membrane by plastocyanin or cytochrome c6. This chain is Photosystem I P700 chlorophyll a apoprotein A2 2, found in Trichormus variabilis (strain ATCC 29413 / PCC 7937) (Anabaena variabilis).